We begin with the raw amino-acid sequence, 476 residues long: Glycogen synthase (476 aa).

Lys-15 is a binding site for ADP-alpha-D-glucose.

Belongs to the glycosyltransferase 1 family. Bacterial/plant glycogen synthase subfamily.

It carries out the reaction [(1-&gt;4)-alpha-D-glucosyl](n) + ADP-alpha-D-glucose = [(1-&gt;4)-alpha-D-glucosyl](n+1) + ADP + H(+). It participates in glycan biosynthesis; glycogen biosynthesis. Its function is as follows. Synthesizes alpha-1,4-glucan chains using ADP-glucose. The chain is Glycogen synthase from Haemophilus influenzae (strain PittEE).